The chain runs to 124 residues: Con-Ins Tx1 (124 aa).

Residues 1–24 (MTTSSYFLLVALGLLLYVFQSSFG) form the signal peptide. 4 cysteine pairs are disulfide-bonded: Cys29–Cys107, Cys41–Cys110, Cys53–Cys123, and Cys109–Cys114. Pro34 is modified (4-hydroxyproline; partial). Positions 59–92 (EQGGANNARANTGRTSSLMKRRGFLSLLKKRGKR) are cleaved as a propeptide — c peptide. 4-carboxyglutamate; partial is present on Glu118.

Belongs to the insulin family. In terms of assembly, heterodimer of A and B chains; disulfide-linked. Expressed by the venom gland.

Its subcellular location is the secreted. This venom insulin facilitates prey capture by rapidly inducing hypoglycemic shock. Intraperitoneal injection of this peptide into zebrafish lowers blood glucose with the same potency than human insulin. In vivo, when applied to water, this peptide reduces overall locomotor activity of zebrafish larvae, observed as a significant decrease in the percentage of time spent swimming and movement frequency. This is Con-Ins Tx1 from Conus textile (Cloth-of-gold cone).